A 417-amino-acid chain; its full sequence is UDP-N-acetylmuramoylalanine--D-glutamate ligase (417 aa).

101 to 107 (GTAGKTS) lines the ATP pocket.

It belongs to the MurCDEF family.

Its subcellular location is the cytoplasm. It catalyses the reaction UDP-N-acetyl-alpha-D-muramoyl-L-alanine + D-glutamate + ATP = UDP-N-acetyl-alpha-D-muramoyl-L-alanyl-D-glutamate + ADP + phosphate + H(+). Its pathway is cell wall biogenesis; peptidoglycan biosynthesis. Functionally, cell wall formation. Catalyzes the addition of glutamate to the nucleotide precursor UDP-N-acetylmuramoyl-L-alanine (UMA). This chain is UDP-N-acetylmuramoylalanine--D-glutamate ligase, found in Thermus thermophilus (strain ATCC BAA-163 / DSM 7039 / HB27).